We begin with the raw amino-acid sequence, 601 residues long: Urocanate hydratase (601 aa).

NAD(+) contacts are provided by residues 63–64 (GG) and Gln141. The insert stretch occupies residues 172–201 (SDRPSALLKQGLSPEGTAPGSGRSSAQVPG). Positions 179–200 (LKQGLSPEGTAPGSGRSSAQVP) are disordered. Residues 216-218 (GMG), Glu236, 282-283 (NA), 307-311 (QTSAH), 317-318 (YL), and Tyr368 contribute to the NAD(+) site. The active site involves Cys456. Gly538 contributes to the NAD(+) binding site.

It belongs to the urocanase family. It depends on NAD(+) as a cofactor.

It localises to the cytoplasm. It catalyses the reaction 4-imidazolone-5-propanoate = trans-urocanate + H2O. The protein operates within amino-acid degradation; L-histidine degradation into L-glutamate; N-formimidoyl-L-glutamate from L-histidine: step 2/3. Catalyzes the conversion of urocanate to 4-imidazolone-5-propionate. The protein is Urocanate hydratase of Ralstonia nicotianae (strain ATCC BAA-1114 / GMI1000) (Ralstonia solanacearum).